Consider the following 601-residue polypeptide: RNA polymerase II C-terminal domain phosphatase-like 5 (601 aa).

The tract at residues 1–20 is disordered; that stretch reads MFVAKNLSPERESKRQKKEP. Residues 8–20 are compositionally biased toward basic and acidic residues; that stretch reads SPERESKRQKKEP. FCP1 homology domains lie at 84–259 and 381–553; these read LNMK…TDES and LNEK…DESE.

As to expression, expressed in roots, seedlings, hypocotyls, cotyledons, leaves, siliques and flowers.

Its subcellular location is the nucleus. It catalyses the reaction O-phospho-L-seryl-[protein] + H2O = L-seryl-[protein] + phosphate. It carries out the reaction O-phospho-L-threonyl-[protein] + H2O = L-threonyl-[protein] + phosphate. Mediates the dephosphorylation of 'Ser-2' of the heptad repeats YSPTSPS in the C-terminal domain of the largest RNA polymerase II subunit (RPB1). This promotes the activity of RNA polymerase II. Positively regulates abscisic acid (ABA) and drought responses, including the regulation of specific genes expression. The polypeptide is RNA polymerase II C-terminal domain phosphatase-like 5 (Arabidopsis thaliana (Mouse-ear cress)).